Consider the following 312-residue polypeptide: Ribosomal RNA small subunit methyltransferase H (312 aa).

Residues 34–36 (AGH), Asp-54, Phe-81, Asp-102, and Gln-109 each bind S-adenosyl-L-methionine.

This sequence belongs to the methyltransferase superfamily. RsmH family.

It localises to the cytoplasm. The catalysed reaction is cytidine(1402) in 16S rRNA + S-adenosyl-L-methionine = N(4)-methylcytidine(1402) in 16S rRNA + S-adenosyl-L-homocysteine + H(+). Specifically methylates the N4 position of cytidine in position 1402 (C1402) of 16S rRNA. The polypeptide is Ribosomal RNA small subunit methyltransferase H (Geobacter sp. (strain M21)).